We begin with the raw amino-acid sequence, 249 residues long: 2-C-methyl-D-erythritol 4-phosphate cytidylyltransferase (249 aa).

It belongs to the IspD/TarI cytidylyltransferase family. IspD subfamily.

It carries out the reaction 2-C-methyl-D-erythritol 4-phosphate + CTP + H(+) = 4-CDP-2-C-methyl-D-erythritol + diphosphate. It participates in isoprenoid biosynthesis; isopentenyl diphosphate biosynthesis via DXP pathway; isopentenyl diphosphate from 1-deoxy-D-xylulose 5-phosphate: step 2/6. In terms of biological role, catalyzes the formation of 4-diphosphocytidyl-2-C-methyl-D-erythritol from CTP and 2-C-methyl-D-erythritol 4-phosphate (MEP). The chain is 2-C-methyl-D-erythritol 4-phosphate cytidylyltransferase from Thermobifida fusca (strain YX).